A 346-amino-acid chain; its full sequence is Protein tas (346 aa).

Catalysis depends on Y53, which acts as the Proton donor. 234-244 (SCLGFGTLTGK) serves as a coordination point for NADP(+).

Belongs to the aldo/keto reductase family. Aldo/keto reductase 2 subfamily.

The polypeptide is Protein tas (tas) (Escherichia coli (strain K12)).